A 203-amino-acid polypeptide reads, in one-letter code: Small ribosomal subunit protein uS4 (203 aa).

Residues 93-156 form the S4 RNA-binding domain; that stretch reads RRLDNVVYRL…MKVPAILEAV (64 aa).

Belongs to the universal ribosomal protein uS4 family. As to quaternary structure, part of the 30S ribosomal subunit. Contacts protein S5. The interaction surface between S4 and S5 is involved in control of translational fidelity.

Functionally, one of the primary rRNA binding proteins, it binds directly to 16S rRNA where it nucleates assembly of the body of the 30S subunit. With S5 and S12 plays an important role in translational accuracy. This is Small ribosomal subunit protein uS4 from Streptococcus pyogenes serotype M4 (strain MGAS10750).